The primary structure comprises 407 residues: Imidazolonepropionase (407 aa).

Fe(3+) contacts are provided by His68 and His70. Positions 68 and 70 each coordinate Zn(2+). Residues Arg77, Tyr140, and His173 each coordinate 4-imidazolone-5-propanoate. Tyr140 is a binding site for N-formimidoyl-L-glutamate. Fe(3+) is bound at residue His238. Residue His238 coordinates Zn(2+). Position 241 (Gln241) interacts with 4-imidazolone-5-propanoate. Residue Asp313 coordinates Fe(3+). A Zn(2+)-binding site is contributed by Asp313. The N-formimidoyl-L-glutamate site is built by Asn315 and Gly317. 4-imidazolone-5-propanoate is bound at residue Thr318.

It belongs to the metallo-dependent hydrolases superfamily. HutI family. Zn(2+) is required as a cofactor. The cofactor is Fe(3+).

It localises to the cytoplasm. The catalysed reaction is 4-imidazolone-5-propanoate + H2O = N-formimidoyl-L-glutamate. It participates in amino-acid degradation; L-histidine degradation into L-glutamate; N-formimidoyl-L-glutamate from L-histidine: step 3/3. In terms of biological role, catalyzes the hydrolytic cleavage of the carbon-nitrogen bond in imidazolone-5-propanoate to yield N-formimidoyl-L-glutamate. It is the third step in the universal histidine degradation pathway. The sequence is that of Imidazolonepropionase from Burkholderia pseudomallei (strain 668).